A 347-amino-acid chain; its full sequence is 4-hydroxy-2-oxovalerate aldolase 2 (347 aa).

A Pyruvate carboxyltransferase domain is found at 9–259 (ITIVDTTLRD…DTGVDLFPLI (251 aa)). Substrate-binding positions include 17–18 (RD), Ser171, and His198. Asp18 contributes to the Mn(2+) binding site. Mn(2+) contacts are provided by His198 and His200. Tyr289 contributes to the substrate binding site.

This sequence belongs to the 4-hydroxy-2-oxovalerate aldolase family.

The catalysed reaction is (S)-4-hydroxy-2-oxopentanoate = acetaldehyde + pyruvate. This chain is 4-hydroxy-2-oxovalerate aldolase 2, found in Rhodococcus opacus (strain B4).